Consider the following 147-residue polypeptide: Myoglobin (147 aa).

The Globin domain maps to 2 to 141 (ADFDAVLKFW…VIADLEANYK (140 aa)). Residue H60 coordinates nitrite. H60 contributes to the O2 binding site. H89 contributes to the heme b binding site.

This sequence belongs to the globin family. Monomeric.

The protein localises to the cytoplasm. It is found in the sarcoplasm. The catalysed reaction is Fe(III)-heme b-[protein] + nitric oxide + H2O = Fe(II)-heme b-[protein] + nitrite + 2 H(+). It catalyses the reaction H2O2 + AH2 = A + 2 H2O. Monomeric heme protein which primary function is to store oxygen and facilitate its diffusion within muscle tissues. Reversibly binds oxygen through a pentacoordinated heme iron and enables its timely and efficient release as needed during periods of heightened demand. Depending on the oxidative conditions of tissues and cells, and in addition to its ability to bind oxygen, it also has a nitrite reductase activity whereby it regulates the production of bioactive nitric oxide. Under stress conditions, like hypoxia and anoxia, it also protects cells against reactive oxygen species thanks to its pseudoperoxidase activity. The protein is Myoglobin (mb) of Sarda chiliensis (Pacific bonito).